Consider the following 340-residue polypeptide: Protein RecA (340 aa).

65–72 is an ATP binding site; the sequence is GPESGGKT.

Belongs to the RecA family.

The protein localises to the cytoplasm. Functionally, can catalyze the hydrolysis of ATP in the presence of single-stranded DNA, the ATP-dependent uptake of single-stranded DNA by duplex DNA, and the ATP-dependent hybridization of homologous single-stranded DNAs. It interacts with LexA causing its activation and leading to its autocatalytic cleavage. The protein is Protein RecA of Thermus aquaticus.